A 153-amino-acid chain; its full sequence is Ribosome maturation factor RimP (153 aa).

The protein belongs to the RimP family.

It localises to the cytoplasm. Its function is as follows. Required for maturation of 30S ribosomal subunits. The sequence is that of Ribosome maturation factor RimP from Nostoc sp. (strain PCC 7120 / SAG 25.82 / UTEX 2576).